Reading from the N-terminus, the 898-residue chain is Chloride channel protein 2 (898 aa).

The Cytoplasmic segment spans residues 1–90 (MAAPAAAAVE…RCHKFLVSRV (90 aa)). An essential for channel gating by both voltage and cell volume region spans residues 19–37 (QYEQTLMYGRYTQDLGAFA). Thr23 carries the post-translational modification Phosphothreonine. The interval 39 to 52 (EEAARIRLGGPEPW) is modulates channel gating by both voltage and cell volume. 2 helical membrane passes run 91-124 (GEDW…AQQW) and 133-158 (LLLQ…TQIL). Positions 164-168 (GSGIP) match the Selectivity filter part_1 motif. The helical intramembrane region spans 167 to 174 (IPEMKTIL). The next 2 membrane-spanning stretches (helical) occupy residues 183-201 (LTLK…ALGS) and 208-226 (EGPF…SKFL). The Selectivity filter part_2 signature appears at 206–210 (GKEGP). 2 consecutive intramembrane regions (helical) follow at residues 242-254 (MLAA…VGCC) and 258-266 (PIGGVLFSI). 5 helical membrane-spanning segments follow: residues 278-298 (YWRG…LAVW), 324-352 (LPAF…VQVM), 361-380 (FLMR…ISTL), 432-452 (ANVF…SALA), and 460-483 (GAFM…MAAW). The Selectivity filter part_3 signature appears at 460 to 464 (GAFMP). The segment at residues 500-514 (GGYAVVGAAALAGAV) is an intramembrane region (helical). An intramembrane region (note=Loop between two helices) is located at residues 515 to 516 (TH). Positions 517 to 528 (TVSTAVIVFELT) form an intramembrane region, helical. An intramembrane region (note=Loop between two helices) is located at residues 529 to 533 (GQIAH). The helical transmembrane segment at 534 to 551 (ILPVMIAVILANAVAQSL) threads the bilayer. At 552 to 898 (QPSLYDSIIR…SPSDSDDKCQ (347 aa)) the chain is on the cytoplasmic side. The CBS 1 domain maps to 587-645 (MVRDVPHVALSCTFRDLRLALHRTKGRTLALVESPESMILLGSIERTQVVALLAAQLSP). Positions 647–658 (RRRQSKQKRRVA) are enriched in basic residues. The interval 647–675 (RRRQSKQKRRVAHTSPPSCQESPPSPETS) is disordered. At Ser710 the chain carries Phosphoserine. The disordered stretch occupies residues 726 to 766 (FCGSPPPEAASESEKSESSEKRKSKRVRISLASDSDLEGEM). A compositionally biased stretch (basic and acidic residues) spans 737–746 (ESEKSESSEK). Ser758 carries the phosphoserine modification. A CBS 2 domain is found at 790-850 (IDPAPFQLVE…GSVTAQGVKV (61 aa)). The short motif at 812–813 (LL) is the Basolateral membrane sorting element. The disordered stretch occupies residues 856–898 (SFRDSATSSSDTETTEVHALWGPRSRHGLPREGSPSDSDDKCQ).

Belongs to the chloride channel (TC 2.A.49) family. ClC-2/CLCN2 subfamily. In terms of assembly, homodimer. Interacts with auxiliary subunit HEPACAM. Phosphorylated. Activated by dephosphorylation. As to expression, ubiquitously expressed.

The protein localises to the cell membrane. Its subcellular location is the basolateral cell membrane. The protein resides in the cell projection. It is found in the dendritic spine membrane. It localises to the axon. The catalysed reaction is chloride(in) = chloride(out). It carries out the reaction thiocyanate(in) = thiocyanate(out). It catalyses the reaction bromide(in) = bromide(out). The enzyme catalyses nitrate(in) = nitrate(out). The catalysed reaction is iodide(out) = iodide(in). With respect to regulation, common gate kinetics are down-regulated by intracellular ATP. Inhibited by AK-42, a derivative of meclofenamate. Inhibited by Cd(2+). Inhibited by Zn(2+) and PKC activation. Inhibited at acidic pH. CCLN2:HEPACAM channel conductance is up-regulated upon hypo-osmolarity. Functionally, voltage-gated and osmosensitive chloride channel. Forms a homodimeric channel where each subunit has its own ion conduction pathway. Conducts double-barreled currents controlled by two types of gates, two fast glutamate gates that control each subunit independently and a slow common gate that opens and shuts off both subunits simultaneously. Displays inward rectification currents activated upon membrane hyperpolarization and extracellular hypotonicity. Contributes to chloride conductance involved in neuron excitability. In hippocampal neurons, generates a significant part of resting membrane conductance and provides an additional chloride efflux pathway to prevent chloride accumulation in dendrites upon GABA receptor activation. In glia, associates with the auxiliary subunit HEPACAM/GlialCAM at astrocytic processes and myelinated fiber tracts where it may regulate transcellular chloride flux buffering extracellular chloride and potassium concentrations. Regulates aldosterone production in adrenal glands. The opening of CLCN2 channels at hyperpolarized membrane potentials in the glomerulosa causes cell membrane depolarization, activation of voltage-gated calcium channels and increased expression of aldosterone synthase, the rate-limiting enzyme for aldosterone biosynthesis. Contributes to chloride conductance in retinal pigment epithelium involved in phagocytosis of shed photoreceptor outer segments and photoreceptor renewal. Conducts chloride currents at the basolateral membrane of epithelial cells with a role in chloride reabsorption rather than secretion. Permeable to small monovalent anions with chloride &gt; thiocyanate &gt; bromide &gt; nitrate &gt; iodide ion selectivity. The polypeptide is Chloride channel protein 2 (CLCN2) (Oryctolagus cuniculus (Rabbit)).